We begin with the raw amino-acid sequence, 153 residues long: Endoribonuclease YbeY (153 aa).

3 residues coordinate Zn(2+): His114, His118, and His124.

The protein belongs to the endoribonuclease YbeY family. It depends on Zn(2+) as a cofactor.

It localises to the cytoplasm. Functionally, single strand-specific metallo-endoribonuclease involved in late-stage 70S ribosome quality control and in maturation of the 3' terminus of the 16S rRNA. The protein is Endoribonuclease YbeY of Shewanella putrefaciens (strain CN-32 / ATCC BAA-453).